Here is a 455-residue protein sequence, read N- to C-terminus: T-box protein VegT-B (455 aa).

The segment at residues 57 to 230 is a DNA-binding region (T-box); sequence LWTQFHQEGT…HNPFAKGFRE (174 aa). Basic and acidic residues predominate over residues 229 to 241; that stretch reads REQERSHKRDDVL. 2 disordered regions span residues 229–276 and 295–350; these read REQE…RIKE and ANQG…RRLT. Over residues 308 to 326 the composition is skewed to polar residues; the sequence is GVNQEQQVPTSSSNFYIKS.

Forms a repression complex on the promoters of the nodal/nr1 and siamois genes with the maternal factors tcf7l1/tcf3 and pouf5.1/oct-25. Interacts (via C-terminus) with tcf7l1/tcf3 (via N-terminus). Also interacts with the other POU-domain transcription factors pou5f1.2/oct-91 and pou5f1.3/oct-60. In terms of tissue distribution, maternally localized to the vegetal hemisphere of oocytes. Zygotic expression parallels blastopore formation and shifts from dorsal expression in the marginal zone of late blastula and early gastrula stages to a ventral/lateral expression at later stages. During neurula and tailbud stages, expressed in the posterior and anterior ends of the embryo. During tailbud stages, expressed in a subset of interneurons in the neural tube.

Its subcellular location is the nucleus. Its function is as follows. Transcription factor required for both mesoderm and endoderm formation in the embryo; signaling determinants and concentration levels may determine which germ layer is formed. Acts together with beta-catenin to activate genes that are responsible for mesoderm induction including wnt-8, eomes t/bra, siamois, mix1 and sox17. Directly binds to promoter DNA. Patterns the mesoderm along the dorsoventral and posterior axis. Activates siamois gene transcription when alone or in combination with beta-catenin, but inhibits siamois transcription in combination with pou5f1.1/oct-25. The polypeptide is T-box protein VegT-B (vegt-b) (Xenopus laevis (African clawed frog)).